A 204-amino-acid polypeptide reads, in one-letter code: Transmembrane protein 186 (204 aa).

The Mitochondrial matrix segment spans residues M1–K69. The helical transmembrane segment at V70–G90 threads the bilayer. Residues Q91–D95 lie on the Mitochondrial intermembrane side of the membrane. The helical transmembrane segment at A96 to Y116 threads the bilayer. The Mitochondrial matrix portion of the chain corresponds to A117–N204.

It belongs to the TMEM186 family. Associates with mitochondrial complex I assembly intermediates during its biogenesis.

The protein resides in the mitochondrion inner membrane. Functionally, as part of the MCIA complex, required for efficient assembly of the mitochondrial complex I. In Drosophila melanogaster (Fruit fly), this protein is Transmembrane protein 186.